A 376-amino-acid chain; its full sequence is RNA binding protein fox-1 homolog 1 (376 aa).

A disordered region spans residues 1–126 (MEEKGSRMVQ…QPKRLHVSNI (126 aa)). Over residues 72–89 (QTHSEQSPADTNAQTVSG) the composition is skewed to polar residues. A compositionally biased stretch (low complexity) spans 90–101 (TATQTDDAAPTD). The segment covering 102-115 (GQPQTQPSENTENK) has biased composition (polar residues). Positions 119-195 (KRLHVSNIPF…RKIEVNNATA (77 aa)) constitute an RRM domain. Position 319 is an asymmetric dimethylarginine (arginine 319).

In terms of assembly, binds to the C-terminus of ATXN2.

Its subcellular location is the nucleus. The protein resides in the cytoplasm. Its function is as follows. RNA-binding protein that regulates alternative splicing events by binding to 5'-UGCAUGU-3' elements. Prevents binding of U2AF2 to the 3'-splice site. Regulates alternative splicing of tissue-specific exons and of differentially spliced exons during erythropoiesis. This Macaca fascicularis (Crab-eating macaque) protein is RNA binding protein fox-1 homolog 1 (RBFOX1).